A 413-amino-acid chain; its full sequence is Multidrug resistance protein MdtA (413 aa).

A signal peptide spans 1–20; it reads MKGSNTFRWAIAIGVVVAAA. Disordered stretches follow at residues 31–57 and 391–413; these read SPTA…RDGP and EPQT…GARA. Positions 397–413 are enriched in basic and acidic residues; that stretch reads ADEKSPSRHEGQKGARA.

This sequence belongs to the membrane fusion protein (MFP) (TC 8.A.1) family. Part of a tripartite efflux system composed of MdtA, MdtB and MdtC.

The protein resides in the cell inner membrane. This is Multidrug resistance protein MdtA from Salmonella paratyphi C (strain RKS4594).